A 289-amino-acid polypeptide reads, in one-letter code: Splicing factor C9orf78 homolog (289 aa).

2 disordered regions span residues 1–30 (MRITGKTFRRRRADSESEEDEQESEEVRLK) and 85–111 (RGKDKVSEEEDLHLGTSFSAETNRRDE). An interaction with SNRNP200 region spans residues 5-58 (GKTFRRRRADSESEEDEQESEEVRLKLEETREVQNLRKRPNGVSAAALLVGEKV). Phosphoserine occurs at positions 15 and 17. At Tyr147 the chain carries Phosphotyrosine. A compositionally biased stretch (basic and acidic residues) spans 232-283 (LNAPIRRNKEEPKARPLRVGDTEKPEPERSPPNRKRPANEKATDDYHYEKFK). The disordered stretch occupies residues 232 to 289 (LNAPIRRNKEEPKARPLRVGDTEKPEPERSPPNRKRPANEKATDDYHYEKFKKMNRRY). Thr253 carries the post-translational modification Phosphothreonine. At Ser261 the chain carries Phosphoserine.

The protein belongs to the TLS1 family. In terms of assembly, component of the spliceosome. Interacts with SNRNP200; the interaction is direct. Interacts with PRPF8.

The protein localises to the nucleus. It is found in the chromosome. Its subcellular location is the centromere. In terms of biological role, plays a role in pre-mRNA splicing by promoting usage of the upstream 3'-splice site at alternative NAGNAG splice sites; these are sites featuring alternative acceptor motifs separated by only a few nucleotides. May also modulate exon inclusion events. PPlays a role in spliceosomal remodeling by displacing WBP4 from SNRNP200 and may act to inhibit SNRNP200 helicase activity. Binds U5 snRNA. Required for proper chromosome segregation. Not required for splicing of shelterin components. The polypeptide is Splicing factor C9orf78 homolog (Mus musculus (Mouse)).